A 130-amino-acid chain; its full sequence is Flagellar assembly factor FliW (130 aa).

This sequence belongs to the FliW family. Interacts with translational regulator CsrA and flagellin(s).

The protein resides in the cytoplasm. Acts as an anti-CsrA protein, binds CsrA and prevents it from repressing translation of its target genes, one of which is flagellin. Binds to flagellin and participates in the assembly of the flagellum. This Borrelia hermsii (strain HS1 / DAH) protein is Flagellar assembly factor FliW.